The following is a 1262-amino-acid chain: Zinc finger protein 592 (1262 aa).

The tract at residues 23–45 (SLDAKEAIQAPSEENESPLKSSG) is disordered. Ser78, Ser142, Ser145, and Ser146 each carry phosphoserine. 3 disordered regions span residues 122 to 174 (SFTS…PPPG), 200 to 278 (KKEP…AHSK), and 294 to 494 (VANV…ASTP). Glycyl lysine isopeptide (Lys-Gly) (interchain with G-Cter in SUMO2) cross-links involve residues Lys200 and Lys204. 2 stretches are compositionally biased toward basic and acidic residues: residues 213 to 232 (QQEHEQGGQKVVEPHKDLDS) and 298 to 308 (TKEDQPGHTKD). Over residues 343–367 (PSDSPRSICSDSSSKGSPSVAASSP) the composition is skewed to low complexity. Residues 454 to 463 (IKTSDSSSPC) show a composition bias toward polar residues. Over residues 484–494 (QQSTAPQASTP) the composition is skewed to low complexity. At Ser529 the chain carries Phosphoserine. Lys546 is covalently cross-linked (Glycyl lysine isopeptide (Lys-Gly) (interchain with G-Cter in SUMO2)). A Phosphoserine modification is found at Ser573. The C2H2-type 1; atypical zinc-finger motif lies at 587–612 (YCCLECGDAFALEKSLSQHYSRRSVH). The segment at 615-639 (VLCTLCSKTLLFFNKCSLLRHARDH) adopts a C2H2-type 2; atypical zinc-finger fold. Position 691 is a phosphoserine (Ser691). The C2H2-type 3; degenerate zinc finger occupies 711 to 731 (TKCPECHKQMRDYMVLATHFQ). Residues 740-764 (LTCQVCQMLLPNQCSFCAHQRIHAH) form a C2H2-type 4 zinc finger. The segment at 768 to 790 (YCCPECGVLCRSAYFQTHVKENC) adopts a C2H2-type 5; atypical zinc-finger fold. 3 C2H2-type zinc fingers span residues 799–822 (YRCIHCGVIHLTLALLKSHIQERH), 827–850 (HKCAFCPMAFKTASSTMDHSTTQH), and 892–915 (FKCPECPLLFLQKPELMQHVKNTH). Positions 924–935 (LSSLQSSTDTSS) are enriched in low complexity. A disordered region spans residues 924–979 (LSSLQSSTDTSSNRPGSRAPAEPPATNVAARGSSLTAGRWGRPEAHRRAEARPRMR). Over residues 964–976 (GRPEAHRRAEARP) the composition is skewed to basic and acidic residues. C2H2-type zinc fingers lie at residues 983–1006 (WTCQECQEWVPDRESYVSHMKKSH) and 1013–1036 (YPCRQCEQSFHNPSSLRKHIRNNH). A C2H2-type 11; atypical zinc finger spans residues 1043-1069 (YTCGYCTEDSPSFPRPSLLESHISLMH). Ser1089 is modified (phosphoserine). The segment at 1124-1146 (FQCAKCTFATDSELEFQSHIPQH) adopts a C2H2-type 12; atypical zinc-finger fold. A C2H2-type 13 zinc finger spans residues 1153–1176 (AQCLLCGLCYTSTSSLNRHLFIVH). 2 positions are modified to phosphoserine: Ser1198 and Ser1202. Positions 1222–1262 (PLVTDLGGQQGLALDEDSAQDPQNQPQASQDQNSHALSPQV) are disordered. Polar residues predominate over residues 1241–1262 (QDPQNQPQASQDQNSHALSPQV).

The protein belongs to the krueppel C2H2-type zinc-finger protein family. In terms of assembly, interacts with ZMYND8. Expressed in the brain.

The protein localises to the nucleus. Functionally, may be involved in transcriptional regulation. The polypeptide is Zinc finger protein 592 (Znf592) (Mus musculus (Mouse)).